Consider the following 359-residue polypeptide: 5-amino-6-(D-ribitylamino)uracil--L-tyrosine 4-hydroxyphenyl transferase (359 aa).

The Radical SAM core domain occupies 45 to 282; that stretch reads VTYVVNANIN…TYAVSRIFFK (238 aa). 3 residues coordinate [4Fe-4S] cluster: Cys59, Cys63, and Cys66.

It belongs to the radical SAM superfamily. CofH family. As to quaternary structure, consists of two subunits, CofG and CofH. It depends on [4Fe-4S] cluster as a cofactor.

The enzyme catalyses 5-amino-6-(D-ribitylamino)uracil + L-tyrosine + S-adenosyl-L-methionine = 5-amino-5-(4-hydroxybenzyl)-6-(D-ribitylimino)-5,6-dihydrouracil + 2-iminoacetate + 5'-deoxyadenosine + L-methionine + H(+). It functions in the pathway cofactor biosynthesis; coenzyme F0 biosynthesis. Functionally, catalyzes the radical-mediated synthesis of 5-amino-5-(4-hydroxybenzyl)-6-(D-ribitylimino)-5,6-dihydrouracil from 5-amino-6-(D-ribitylamino)uracil and L-tyrosine. The chain is 5-amino-6-(D-ribitylamino)uracil--L-tyrosine 4-hydroxyphenyl transferase from Methanococcus maripaludis (strain C6 / ATCC BAA-1332).